Consider the following 161-residue polypeptide: Protein-export protein SecB (161 aa).

Belongs to the SecB family. Homotetramer, a dimer of dimers. One homotetramer interacts with 1 SecA dimer.

Its subcellular location is the cytoplasm. Functionally, one of the proteins required for the normal export of preproteins out of the cell cytoplasm. It is a molecular chaperone that binds to a subset of precursor proteins, maintaining them in a translocation-competent state. It also specifically binds to its receptor SecA. The sequence is that of Protein-export protein SecB from Shewanella pealeana (strain ATCC 700345 / ANG-SQ1).